Here is a 410-residue protein sequence, read N- to C-terminus: Aspartate aminotransferase (410 aa).

L-aspartate contacts are provided by G47, W135, and N185. Residue K249 is modified to N6-(pyridoxal phosphate)lysine. R385 contacts L-aspartate.

This sequence belongs to the class-I pyridoxal-phosphate-dependent aminotransferase family. Homodimer. The cofactor is pyridoxal 5'-phosphate.

It is found in the cytoplasm. The enzyme catalyses L-aspartate + 2-oxoglutarate = oxaloacetate + L-glutamate. Functionally, catalyzes the reversible conversion of aspartate and 2-oxoglutarate to glutamate and oxaloacetate. This Rhizobium meliloti (Ensifer meliloti) protein is Aspartate aminotransferase.